Reading from the N-terminus, the 228-residue chain is MKISFHGQSCIKIITGNTTILVDPFISGNEKCDLKAEEQMPDFIVLSHGHDDHVGDTVEIAKNSGATVICNADLASFLAVEDGLENIAPMHIGGKRQFDFGQVKLTQAFHGSQTVRDGRIINLGFPTGIVFTIEGKNIYFAGDTGLFSDMKLIGELNPLDVAFLPIGDNFTMGPEDAAIAARFLQAKLVIPMHYNTFPLIEQDPHQFVASLDEGISGKVLEIGEGIEI.

This sequence belongs to the UPF0173 family.

The polypeptide is UPF0173 metal-dependent hydrolase lin1612 (Listeria innocua serovar 6a (strain ATCC BAA-680 / CLIP 11262)).